The sequence spans 270 residues: Sulfur carrier protein FdhD (270 aa).

Residue Cys-116 is the Cysteine persulfide intermediate of the active site. 253-258 (FAREGK) serves as a coordination point for Mo-bis(molybdopterin guanine dinucleotide).

Belongs to the FdhD family.

It is found in the cytoplasm. Functionally, required for formate dehydrogenase (FDH) activity. Acts as a sulfur carrier protein that transfers sulfur from IscS to the molybdenum cofactor prior to its insertion into FDH. This Haemophilus influenzae (strain ATCC 51907 / DSM 11121 / KW20 / Rd) protein is Sulfur carrier protein FdhD.